A 373-amino-acid polypeptide reads, in one-letter code: tRNA/tmRNA (uracil-C(5))-methyltransferase (373 aa).

S-adenosyl-L-methionine contacts are provided by Gln-190, Tyr-219, Asn-224, Glu-240, and Asp-300. Catalysis depends on Cys-325, which acts as the Nucleophile. Glu-359 (proton acceptor) is an active-site residue.

This sequence belongs to the class I-like SAM-binding methyltransferase superfamily. RNA M5U methyltransferase family. TrmA subfamily.

It catalyses the reaction uridine(54) in tRNA + S-adenosyl-L-methionine = 5-methyluridine(54) in tRNA + S-adenosyl-L-homocysteine + H(+). The enzyme catalyses uridine(341) in tmRNA + S-adenosyl-L-methionine = 5-methyluridine(341) in tmRNA + S-adenosyl-L-homocysteine + H(+). Functionally, dual-specificity methyltransferase that catalyzes the formation of 5-methyluridine at position 54 (m5U54) in all tRNAs, and that of position 341 (m5U341) in tmRNA (transfer-mRNA). The protein is tRNA/tmRNA (uracil-C(5))-methyltransferase of Chromohalobacter salexigens (strain ATCC BAA-138 / DSM 3043 / CIP 106854 / NCIMB 13768 / 1H11).